A 217-amino-acid chain; its full sequence is Somatotropin (217 aa).

The first 26 residues, 1–26 (MATGSRTSLLLAFGLLCLPWLQEGSA), serve as a signal peptide directing secretion. His-44 serves as a coordination point for Zn(2+). Cys-79 and Cys-191 are oxidised to a cystine. Position 132 is a phosphoserine (Ser-132). Position 163 is a deamidated glutamine; by deterioration (Gln-163). Ser-176 bears the Phosphoserine mark. Asn-178 carries the deamidated asparagine; by deterioration modification. Glu-200 lines the Zn(2+) pocket. A disulfide bridge connects residues Cys-208 and Cys-215.

It belongs to the somatotropin/prolactin family. Monomer, dimer, trimer, tetramer and pentamer, disulfide-linked or non-covalently associated, in homomeric and heteromeric combinations. Can also form a complex either with GHBP or with the alpha2-macroglobulin complex.

The protein resides in the secreted. In terms of biological role, plays an important role in growth control. Its major role in stimulating body growth is to stimulate the liver and other tissues to secrete IGF1. It stimulates both the differentiation and proliferation of myoblasts. It also stimulates amino acid uptake and protein synthesis in muscle and other tissues. The chain is Somatotropin (GH1) from Homo sapiens (Human).